The chain runs to 420 residues: ATP-dependent Clp protease ATP-binding subunit ClpX (420 aa).

A ClpX-type ZB domain is found at 4-57 (KTPGNNGKQKLFCSFCGKEQDAVKRLVAGPGVYICDECISLCNEIIAEDHEHSH). Zn(2+) is bound by residues cysteine 16, cysteine 19, cysteine 38, and cysteine 41. 122–129 (PTGSGKTL) contributes to the ATP binding site.

The protein belongs to the ClpX chaperone family. In terms of assembly, component of the ClpX-ClpP complex. Forms a hexameric ring that, in the presence of ATP, binds to fourteen ClpP subunits assembled into a disk-like structure with a central cavity, resembling the structure of eukaryotic proteasomes.

Functionally, ATP-dependent specificity component of the Clp protease. It directs the protease to specific substrates. Can perform chaperone functions in the absence of ClpP. The sequence is that of ATP-dependent Clp protease ATP-binding subunit ClpX from Leptospira interrogans serogroup Icterohaemorrhagiae serovar copenhageni (strain Fiocruz L1-130).